A 269-amino-acid chain; its full sequence is MPELPEVETSRRGIEPHLVGATILHAHIRNGRLRWPVSDEIYRLSDTPVLSVQRRAKYLLLELPDGWIIIHLGMSGSLRILSEALPAEKHDHVDLVMSNGKILRYTDPRRFGAWLWTKELEGHNVLAHLGPEPLSDEFNGEYLRQKCAKKKTAIKPWLMDNKLVVGVGNIYASESLFAAGIHPDRLASSLSTEECDLLARVIKAVLLRSIEQGGTTLKDFLQSDGKPGYFAQELQVYGRKGEPCRVCGTPIVATKHAQRATFYCRHCQK.

The active-site Schiff-base intermediate with DNA is the Pro-2. The active-site Proton donor is the Glu-3. Lys-57 (proton donor; for beta-elimination activity) is an active-site residue. DNA is bound by residues His-90, Arg-109, and Lys-150. The FPG-type zinc finger occupies 235–269 (QVYGRKGEPCRVCGTPIVATKHAQRATFYCRHCQK). Arg-259 serves as the catalytic Proton donor; for delta-elimination activity.

This sequence belongs to the FPG family. Monomer. It depends on Zn(2+) as a cofactor.

The enzyme catalyses Hydrolysis of DNA containing ring-opened 7-methylguanine residues, releasing 2,6-diamino-4-hydroxy-5-(N-methyl)formamidopyrimidine.. The catalysed reaction is 2'-deoxyribonucleotide-(2'-deoxyribose 5'-phosphate)-2'-deoxyribonucleotide-DNA = a 3'-end 2'-deoxyribonucleotide-(2,3-dehydro-2,3-deoxyribose 5'-phosphate)-DNA + a 5'-end 5'-phospho-2'-deoxyribonucleoside-DNA + H(+). Functionally, involved in base excision repair of DNA damaged by oxidation or by mutagenic agents. Acts as a DNA glycosylase that recognizes and removes damaged bases. Has a preference for oxidized purines, such as 7,8-dihydro-8-oxoguanine (8-oxoG). Has AP (apurinic/apyrimidinic) lyase activity and introduces nicks in the DNA strand. Cleaves the DNA backbone by beta-delta elimination to generate a single-strand break at the site of the removed base with both 3'- and 5'-phosphates. The protein is Formamidopyrimidine-DNA glycosylase of Salmonella agona (strain SL483).